Reading from the N-terminus, the 550-residue chain is CTP synthase (550 aa).

Positions 1–270 (MTKYVFVTGG…DNIVCEALGL (270 aa)) are amidoligase domain. Ser-13 serves as a coordination point for CTP. Residue Ser-13 participates in UTP binding. ATP is bound by residues 14–19 (SLGKGI) and Asp-71. Positions 71 and 144 each coordinate Mg(2+). Residues 151–153 (DIE), 191–196 (KTKPTQ), and Lys-227 each bind CTP. UTP-binding positions include 191–196 (KTKPTQ) and Lys-227. Residues 295–545 (TIGMVGKYVD…IRAALEHKAQ (251 aa)) form the Glutamine amidotransferase type-1 domain. L-glutamine is bound at residue Gly-356. Catalysis depends on Cys-383, which acts as the Nucleophile; for glutamine hydrolysis. L-glutamine-binding positions include 384 to 387 (LGMQ) and Glu-407. The interval 430–459 (VERRDNSSDLGGTMRKGAQRCPIRPGTRAQ) is disordered. Residue Arg-473 coordinates L-glutamine. Active-site residues include His-518 and Glu-520.

Belongs to the CTP synthase family. In terms of assembly, homotetramer.

It carries out the reaction UTP + L-glutamine + ATP + H2O = CTP + L-glutamate + ADP + phosphate + 2 H(+). It catalyses the reaction L-glutamine + H2O = L-glutamate + NH4(+). The catalysed reaction is UTP + NH4(+) + ATP = CTP + ADP + phosphate + 2 H(+). It participates in pyrimidine metabolism; CTP biosynthesis via de novo pathway; CTP from UDP: step 2/2. Allosterically activated by GTP, when glutamine is the substrate; GTP has no effect on the reaction when ammonia is the substrate. The allosteric effector GTP functions by stabilizing the protein conformation that binds the tetrahedral intermediate(s) formed during glutamine hydrolysis. Inhibited by the product CTP, via allosteric rather than competitive inhibition. Functionally, catalyzes the ATP-dependent amination of UTP to CTP with either L-glutamine or ammonia as the source of nitrogen. Regulates intracellular CTP levels through interactions with the four ribonucleotide triphosphates. This Bordetella parapertussis (strain 12822 / ATCC BAA-587 / NCTC 13253) protein is CTP synthase.